A 270-amino-acid polypeptide reads, in one-letter code: Putative pyruvate, phosphate dikinase regulatory protein (270 aa).

Glycine 151–threonine 158 provides a ligand contact to ADP.

Belongs to the pyruvate, phosphate/water dikinase regulatory protein family. PDRP subfamily.

The enzyme catalyses N(tele)-phospho-L-histidyl/L-threonyl-[pyruvate, phosphate dikinase] + ADP = N(tele)-phospho-L-histidyl/O-phospho-L-threonyl-[pyruvate, phosphate dikinase] + AMP + H(+). The catalysed reaction is N(tele)-phospho-L-histidyl/O-phospho-L-threonyl-[pyruvate, phosphate dikinase] + phosphate + H(+) = N(tele)-phospho-L-histidyl/L-threonyl-[pyruvate, phosphate dikinase] + diphosphate. Functionally, bifunctional serine/threonine kinase and phosphorylase involved in the regulation of the pyruvate, phosphate dikinase (PPDK) by catalyzing its phosphorylation/dephosphorylation. The sequence is that of Putative pyruvate, phosphate dikinase regulatory protein from Ligilactobacillus salivarius (strain UCC118) (Lactobacillus salivarius).